The following is a 199-amino-acid chain: Ras-related and estrogen-regulated growth inhibitor (199 aa).

GTP contacts are provided by residues 13 to 20 (GRAGVGKS), 60 to 64 (DTAGQ), and 118 to 121 (NKAD).

Belongs to the small GTPase superfamily. Ras family. In terms of tissue distribution, detected in heart, brain, placenta, lung, liver, skin, kidney and pancreas. Detected in estrogen receptor-positive breast-derived cell lines, but not in estrogen receptor-negative cell lines. Expression is decreased or lost in a significant proportion of primary breast tumors with poor clinical prognosis.

Its subcellular location is the cytoplasm. It carries out the reaction GTP + H2O = GDP + phosphate + H(+). Its function is as follows. Binds GDP/GTP and possesses intrinsic GTPase activity. Has higher affinity for GDP than for GTP. In cell lines overexpression leads to a reduction in the rate of proliferation, colony formation and in tumorigenic potential. The protein is Ras-related and estrogen-regulated growth inhibitor (RERG) of Homo sapiens (Human).